An 839-amino-acid chain; its full sequence is Small conductance calcium-activated potassium channel protein 2 (839 aa).

Disordered regions lie at residues 1-33, 64-115, 195-258, and 280-375; these read MPIV…QESP, QRGF…QQPG, ALRQ…RRES, and SNLS…KKNQ. Low complexity-rich tracts occupy residues 198 to 212 and 219 to 235; these read QQYA…QYHQ and ATSP…GPPL. Residues 236-253 are compositionally biased toward basic residues; sequence SHHHHHPHPAHHQHHQPQ. The segment covering 313–326 has biased composition (low complexity); sequence SSPSAAAAASSSAP. The segment covering 345-363 has biased composition (gly residues); that stretch reads GTGGGGSTGGGGGGSGHGS. Residues 398–418 form a helical membrane-spanning segment; the sequence is ALIFGMFGIVVMVIETELSWG. Y420 is modified (phosphotyrosine). The helical transmembrane segment at 428–448 threads the bilayer; the sequence is LALKCLISLSTIILLGLIIVY. The chain crosses the membrane as a helical span at residues 474-494; sequence IFFICLEILVCAIHPIPGNYT. The helical transmembrane segment at 516-536 threads the bilayer; it reads IILSIPMFLRLYLIARVMLLH. The helical transmembrane segment at 565–585 threads the bilayer; that stretch reads LMTICPGTVLLVFSISLWIIA. The pore-forming intramembrane region spans 605 to 625; the sequence is FLGAMWLISITFLSIGYGDMV. The helical transmembrane segment at 634–654 threads the bilayer; that stretch reads VCLLTGIMGAGCTALVVAVVA. The tract at residues 672 to 748 is calmodulin-binding; that stretch reads DTQLTKRVKN…LVDLAKTQNI (77 aa). The segment covering 810-819 has biased composition (basic and acidic residues); it reads HVSYNAERSR. A disordered region spans residues 810 to 839; sequence HVSYNAERSRSSSRRRRSSSTAPPTSSESS. Residues 828 to 839 show a composition bias toward low complexity; that stretch reads SSTAPPTSSESS.

The protein belongs to the potassium channel KCNN family. KCa2.2/KCNN2 subfamily. Homodimer. Heteromultimer with KCNN1 and KCNN3. The complex is composed of 4 channel subunits each of which binds to a calmodulin subunit which regulates the channel activity through calcium-binding. Interacts (via N-terminal domain) with MPP2. Expressed in atrial and ventricular myocytes with higher levels in atrial myocytes (at protein level). Highly expressed in brain, liver and colon with low levels in kidney and testis. In colon, detected in smooth muscle cells.

The protein resides in the membrane. Its subcellular location is the cytoplasm. It is found in the myofibril. It localises to the sarcomere. The protein localises to the z line. The catalysed reaction is K(+)(in) = K(+)(out). With respect to regulation, inhibited by bee venom neurotoxin apamin. Inhibited by UCL 1684 and tetraethylammonium (TEA). In terms of biological role, small conductance calcium-activated potassium channel that mediates the voltage-independent transmembrane transfer of potassium across the cell membrane through a constitutive interaction with calmodulin which binds the intracellular calcium allowing its opening. The current is characterized by a voltage-independent activation, an intracellular calcium concentration increase-dependent activation and a single-channel conductance of about 3 picosiemens. Also presents an inwardly rectifying current, thus reducing its already small outward conductance of potassium ions, which is particularly the case when the membrane potential displays positive values, above + 20 mV. The inward rectification could be due to a blockade of the outward current by intracellular divalent cations such as calcium and magnesium and could also be due to an intrinsic property of the channel pore, independent of intracellular divalent ions. There are three positively charged amino acids in the S6 transmembrane domain, close to the pore, that collectively control the conductance and rectification through an electrostatic mechanism. Additionally, electrostatic contributions from these residues also play an important role in determining the intrinsic open probability of the channel in the absence of calcium, affecting the apparent calcium affinity for activation. Forms an heteromeric complex with calmodulin, which is constitutively associated in a calcium-independent manner. Channel opening is triggered when calcium binds the calmodulin resulting in a rotary movement leading to the formation of the dimeric complex to open the gate. Plays a role in the repolarization phase of cardiac action potential. The sequence is that of Small conductance calcium-activated potassium channel protein 2 from Mus musculus (Mouse).